The following is a 367-amino-acid chain: N6-succino-2-amino-2'-deoxyadenylate synthase (367 aa).

The Proton acceptor role is filled by S17. The ATP site is built by S17, T18, G19, K20, and G21. A dGMP-binding site is contributed by S17. Residue S17 coordinates Mg(2+). N43 serves as a coordination point for dGMP. The ATP site is built by G45, H46, and T47. A Mg(2+)-binding site is contributed by G45. Residues S128, T129, and R143 each coordinate dGMP. Q197 is an ATP binding site. T212 is a binding site for dGMP. Mg(2+) is bound at residue T284. L-aspartate-binding residues include T284, V285, and R290. Residues N315, N318, and G354 each contribute to the ATP site.

It belongs to the Caudovirales PurZ family. Mg(2+) serves as cofactor.

The enzyme catalyses dGMP + L-aspartate + ATP = (2S)-2-amino-2'-deoxyadenylo-succinate + ADP + phosphate + 2 H(+). It participates in purine metabolism. Its function is as follows. Involved in the synthesis of the atypical nucleotide dZTP (2-amino-2'-deoxyadenosine-5'-triphosphate). Catalyzes the condensation of aspartate with deoxyguanylate into dSMP (N6-succino-2-amino-2'-deoxyadenylate), which undergoes defumarylation and phosphorylation respectively by host PurB and guanylate/nucleoside diphosphate kinases to give dZTP. dZTP is integrated into the viral genome instead of adenine by the viral DNA polymerase. This Z-base probably completely replaces adenosine and forms a triple bond to the opposite T-base. The resulting non-standard viral DNA is called Z-genome. The chemically modified DNA is probably harder for the host bacteria to digest with nucleases or restriction enzymes. The protein is N6-succino-2-amino-2'-deoxyadenylate synthase of Salmonella phage PMBT28.